A 406-amino-acid chain; its full sequence is tRNA-specific 2-thiouridylase MnmA (406 aa).

Residues 6-13 and leucine 32 contribute to the ATP site; that span reads AMSGGVDS. The Nucleophile role is filled by cysteine 101. The cysteines at positions 101 and 193 are disulfide-linked. ATP is bound at residue glycine 125. The segment at 143–145 is interaction with tRNA; sequence KDQ. Cysteine 193 (cysteine persulfide intermediate) is an active-site residue. Residues 378–406 are disordered; the sequence is GAPIEEQPAPGTVGAVDADAIEQGEDAQR. The segment covering 396–406 has biased composition (acidic residues); it reads DAIEQGEDAQR.

The protein belongs to the MnmA/TRMU family.

Its subcellular location is the cytoplasm. The enzyme catalyses S-sulfanyl-L-cysteinyl-[protein] + uridine(34) in tRNA + AH2 + ATP = 2-thiouridine(34) in tRNA + L-cysteinyl-[protein] + A + AMP + diphosphate + H(+). Its function is as follows. Catalyzes the 2-thiolation of uridine at the wobble position (U34) of tRNA, leading to the formation of s(2)U34. This chain is tRNA-specific 2-thiouridylase MnmA, found in Corynebacterium urealyticum (strain ATCC 43042 / DSM 7109).